Reading from the N-terminus, the 248-residue chain is Probable septum site-determining protein MinC (248 aa).

The tract at residues 94–126 (GMPPAMRGGQPAADFEAPAGEPQANPGAPEPQI) is disordered.

It belongs to the MinC family. As to quaternary structure, interacts with MinD and FtsZ.

Functionally, cell division inhibitor that blocks the formation of polar Z ring septums. Rapidly oscillates between the poles of the cell to destabilize FtsZ filaments that have formed before they mature into polar Z rings. Prevents FtsZ polymerization. This chain is Probable septum site-determining protein MinC, found in Brucella suis biovar 1 (strain 1330).